The following is a 937-amino-acid chain: MTDYKATLNLPQTGFPMKAGLSQREPARLKEWQQKQLYQKIREAFAGRPKFILHDGPPYANGDIHIGHAVNKILKDMIVKSRTLAGFDAPYVPGWDCHGLPIELMVEKKVGKAGHKVDAGTFRKKCREYASKQVAGQKSDFMRLGVLGDWDNPYLTMDFTFEANIIRSLGKIVDNGHLQQGFKPVHWCLDCGSALAEAEVEYEDKISPAIDVAFPVVDVADFVARSGIEASAPALVIWTTTPWTLPANRAVAVHPELDYVLLSGELSGVARELLVAEALADDLVTRWGLENVTRSAAVAGSKLEMLALQHPFLEAQVPVVFGEHVTTDAGTGLVHTAPGHGVDDFMVGKQYDLDPISPVLDNGLFREDLPVVGGLHVSKANEPVIEALKDSGNLVKLAKIEHSYPHCWRHKTPLIFRATAQWFVSMDQAGLLPRARQEIDKVQWLPEWGKARIEGMLTDRPDWCISRQRTWGVPIALFVNKETSELHPQTPALIEQVAQRVEKAGVDAWFDLDPAELLGDEADQYSKVTDTLDVWFDSGVTHYCVLDQREQLRAPADLYLEGSDQHRGWFQSSLLTSLAIRDAAPYSTVLTHGFTVDEHGRKMSKSVGNVIAPQEVWNDLGADILRLWVCATDYRGEMSVSKDILKQMGDSYRRIRNTSRFLLSNLSGFEPATDALQPEQMLALDRYIVDRALQVQAEIQDLYDGYHFHQVYQKLHNFCALDLGGFYLDIIKDRQYTTQADSVARRSCQTALYHIAQALVRWMAPVLSFTAEEIYENLPGERLDSVFLAEWYDGLFALADNADMGRAFWDKVQDAKQAVNKAIEGARAAKLIKGSLSAEVVLFVDAEQNALLQRLGDELRFVTITSAAVLKPLAEAPAELEDTSVAGLKVQVLASDHAKCARCWHHQPDVGSHAEHPELCGRCITNVEGDGEVRHYA.

The 'HIGH' region signature appears at 58-68 (PYANGDIHIGH). Glutamate 561 serves as a coordination point for L-isoleucyl-5'-AMP. The 'KMSKS' region signature appears at 602–606 (KMSKS). Lysine 605 lines the ATP pocket. Zn(2+)-binding residues include cysteine 900, cysteine 903, cysteine 920, and cysteine 923.

Belongs to the class-I aminoacyl-tRNA synthetase family. IleS type 1 subfamily. As to quaternary structure, monomer. The cofactor is Zn(2+).

The protein resides in the cytoplasm. The enzyme catalyses tRNA(Ile) + L-isoleucine + ATP = L-isoleucyl-tRNA(Ile) + AMP + diphosphate. Its function is as follows. Catalyzes the attachment of isoleucine to tRNA(Ile). As IleRS can inadvertently accommodate and process structurally similar amino acids such as valine, to avoid such errors it has two additional distinct tRNA(Ile)-dependent editing activities. One activity is designated as 'pretransfer' editing and involves the hydrolysis of activated Val-AMP. The other activity is designated 'posttransfer' editing and involves deacylation of mischarged Val-tRNA(Ile). The chain is Isoleucine--tRNA ligase from Alcanivorax borkumensis (strain ATCC 700651 / DSM 11573 / NCIMB 13689 / SK2).